The sequence spans 781 residues: Phenylalanine--tRNA ligase beta subunit (781 aa).

The tRNA-binding domain occupies 39-147 (APPFNDVVVA…DDAPVGEDLR (109 aa)). A B5 domain is found at 398–473 (PRREPIELRL…RLFGYDRIPA (76 aa)). The Mg(2+) site is built by Asp-451, Asp-457, Glu-460, and Glu-461. Residues 687-780 (SRFPQVRRDL…AARRCSATLR (94 aa)) form the FDX-ACB domain.

The protein belongs to the phenylalanyl-tRNA synthetase beta subunit family. Type 1 subfamily. In terms of assembly, tetramer of two alpha and two beta subunits. Mg(2+) serves as cofactor.

It is found in the cytoplasm. The enzyme catalyses tRNA(Phe) + L-phenylalanine + ATP = L-phenylalanyl-tRNA(Phe) + AMP + diphosphate + H(+). In Thiobacillus denitrificans (strain ATCC 25259 / T1), this protein is Phenylalanine--tRNA ligase beta subunit.